The primary structure comprises 201 residues: MRLRNIPDALERIQNQNLLVKTPWNIDDSWIIEIGMGKGKMISQLAFDNPNKNFLGVEKYPSAAVKSIKYVKKYNLSNFFILISDAKDLLDQIKGKANTIWLTFPDPWPKNRHYKRRLTYKDFLKIYANLLVKDGILKLKTDNLKFFEFSIESLKENGWKITYQTNDLHNSLVNSSNIKTTYEEKWVNLNYKIHYLEAIFI.

Glu-33, Glu-58, Asp-85, and Asp-106 together coordinate S-adenosyl-L-methionine. Asp-106 is a catalytic residue. Substrate is bound by residues Lys-110, Asp-142, and 180 to 183 (TTYE).

It belongs to the class I-like SAM-binding methyltransferase superfamily. TrmB family.

The enzyme catalyses guanosine(46) in tRNA + S-adenosyl-L-methionine = N(7)-methylguanosine(46) in tRNA + S-adenosyl-L-homocysteine. The protein operates within tRNA modification; N(7)-methylguanine-tRNA biosynthesis. In terms of biological role, catalyzes the formation of N(7)-methylguanine at position 46 (m7G46) in tRNA. This is tRNA (guanine-N(7)-)-methyltransferase from Mesomycoplasma hyopneumoniae (strain 7448) (Mycoplasma hyopneumoniae).